The sequence spans 356 residues: DNA polymerase IV (356 aa).

Positions 6 to 187 (IIHIDMDYFF…LDIGDFPGVG (182 aa)) constitute a UmuC domain. Residues Asp10 and Asp105 each contribute to the Mg(2+) site. Glu106 is an active-site residue.

The protein belongs to the DNA polymerase type-Y family. Monomer. It depends on Mg(2+) as a cofactor.

Its subcellular location is the cytoplasm. The enzyme catalyses DNA(n) + a 2'-deoxyribonucleoside 5'-triphosphate = DNA(n+1) + diphosphate. Its function is as follows. Poorly processive, error-prone DNA polymerase involved in untargeted mutagenesis. Copies undamaged DNA at stalled replication forks, which arise in vivo from mismatched or misaligned primer ends. These misaligned primers can be extended by PolIV. Exhibits no 3'-5' exonuclease (proofreading) activity. May be involved in translesional synthesis, in conjunction with the beta clamp from PolIII. The protein is DNA polymerase IV of Staphylococcus aureus (strain COL).